The following is a 338-amino-acid chain: MSGMRTLGEFIVEKQADFPHASGDLSSLLSSIRLAAKIVNREINKAGLVDITGAAGVENIQGEVQQKLDVYANEKFKSALEARDQVCGVASEEEDEAVAFNKELNKNAKYVVLMDPLDGSSNIDVNVSVGTIFSIYRRVSPIGTPPTQEDFLQPGHKQVAAGYIIYGSSTMLVYTTGNGVNGFTYDPSLGTFCLSHENMMIPQNGNIYSINEGNYIRFPMGVKKYIKYCQENVPEDGRPYTSRYIGSLVADFHRNLLKGGIYLYPSTQSHPQGKLRLLYECNPMAFLIEQAGGLASDGVNRILDLKPTELHQRVPFFVGSTNMVKKVEEFLEVYRDEA.

Positions 92, 115, 117, and 118 each coordinate Mg(2+). Substrate is bound by residues 118–121 (DGSS), N211, Y244, 262–264 (YLY), and K274. E280 contacts Mg(2+).

It belongs to the FBPase class 1 family. As to quaternary structure, homotetramer. Mg(2+) is required as a cofactor.

The protein localises to the cytoplasm. The catalysed reaction is beta-D-fructose 1,6-bisphosphate + H2O = beta-D-fructose 6-phosphate + phosphate. Its pathway is carbohydrate biosynthesis; gluconeogenesis. The chain is Fructose-1,6-bisphosphatase class 1 from Vibrio vulnificus (strain YJ016).